Here is a 180-residue protein sequence, read N- to C-terminus: Large ribosomal subunit protein uL6 (180 aa).

It belongs to the universal ribosomal protein uL6 family. In terms of assembly, part of the 50S ribosomal subunit.

In terms of biological role, this protein binds to the 23S rRNA, and is important in its secondary structure. It is located near the subunit interface in the base of the L7/L12 stalk, and near the tRNA binding site of the peptidyltransferase center. The sequence is that of Large ribosomal subunit protein uL6 from Clostridium botulinum (strain Okra / Type B1).